Consider the following 141-residue polypeptide: ATP synthase epsilon chain (141 aa).

It belongs to the ATPase epsilon chain family. As to quaternary structure, F-type ATPases have 2 components, CF(1) - the catalytic core - and CF(0) - the membrane proton channel. CF(1) has five subunits: alpha(3), beta(3), gamma(1), delta(1), epsilon(1). CF(0) has three main subunits: a, b and c.

The protein resides in the cell inner membrane. Its function is as follows. Produces ATP from ADP in the presence of a proton gradient across the membrane. This Burkholderia ambifaria (strain ATCC BAA-244 / DSM 16087 / CCUG 44356 / LMG 19182 / AMMD) (Burkholderia cepacia (strain AMMD)) protein is ATP synthase epsilon chain.